The following is a 96-amino-acid chain: Co-chaperonin GroES (96 aa).

This sequence belongs to the GroES chaperonin family. In terms of assembly, heptamer of 7 subunits arranged in a ring. Interacts with the chaperonin GroEL.

The protein localises to the cytoplasm. In terms of biological role, together with the chaperonin GroEL, plays an essential role in assisting protein folding. The GroEL-GroES system forms a nano-cage that allows encapsulation of the non-native substrate proteins and provides a physical environment optimized to promote and accelerate protein folding. GroES binds to the apical surface of the GroEL ring, thereby capping the opening of the GroEL channel. The protein is Co-chaperonin GroES of Polaromonas sp. (strain JS666 / ATCC BAA-500).